The primary structure comprises 557 residues: TBCC domain-containing protein 1 (557 aa).

The C-CAP/cofactor C-like domain occupies 290–435 (TTKRAKIACN…LEDHMARTGL (146 aa)).

This sequence belongs to the TBCC family.

The protein resides in the cytoplasm. The protein localises to the cytoskeleton. It localises to the microtubule organizing center. Its subcellular location is the centrosome. It is found in the spindle pole. In terms of biological role, plays a role in the regulation of centrosome and Golgi apparatus positioning, with consequences on cell shape and cell migration. In Homo sapiens (Human), this protein is TBCC domain-containing protein 1 (TBCCD1).